Here is a 459-residue protein sequence, read N- to C-terminus: MRASWVANRQGKSNVSQLHFARQGMITEEMAYVANRENLPESLVMEEVARGRMIIPANINHLNLEPMAIGIASKCKVNANIGASPNASDVGEELKKLELAVKYGADTVMDLSTGGVNLDEVRTAIINASPVPIGTVPVYQALESVHGSIEKLSEEDFLHIIEKHCQQGVDYQTIHAGLLIEHLPKVKGRLTGIVSRGGGILAQWMLYHHKQNPLFSRFDDICEIFKRYDCSFSLGDSLRPGCLHDASDEAQLAELKTLGQLTKRAWAHDIQVMVEGPGHVPMDQIEFNVRKQMEDCSEAPFYVLGPLVTDIAPGYDHITSAIGAAMAGWYGTAMLCYVTPKEHLGLPNPEDVREGLIAYKIAAHAADIARHRSGARDRDDELSKARYAFDWNKQFELSLDPERARQYHDETLPADIYKQAEFCSMCGPKHCPMQTKITDKDLDDLEDVIKSKDASKINL.

Substrate contacts are provided by residues N80, M109, Y139, H175, 195-197, 236-239, and E275; these read SRG and DSLR. A Zn(2+)-binding site is contributed by H279. Y302 serves as a coordination point for substrate. H343 is a Zn(2+) binding site. The [4Fe-4S] cluster site is built by C423, C426, and C431.

Belongs to the ThiC family. The cofactor is [4Fe-4S] cluster.

It catalyses the reaction 5-amino-1-(5-phospho-beta-D-ribosyl)imidazole + S-adenosyl-L-methionine = 4-amino-2-methyl-5-(phosphooxymethyl)pyrimidine + CO + 5'-deoxyadenosine + formate + L-methionine + 3 H(+). It participates in cofactor biosynthesis; thiamine diphosphate biosynthesis. Its function is as follows. Catalyzes the synthesis of the hydroxymethylpyrimidine phosphate (HMP-P) moiety of thiamine from aminoimidazole ribotide (AIR) in a radical S-adenosyl-L-methionine (SAM)-dependent reaction. The protein is Phosphomethylpyrimidine synthase of Prochlorococcus marinus (strain MIT 9211).